Consider the following 303-residue polypeptide: Elongation factor Ts (303 aa).

The involved in Mg(2+) ion dislocation from EF-Tu stretch occupies residues 81 to 84 (TDFV).

This sequence belongs to the EF-Ts family.

It is found in the cytoplasm. Associates with the EF-Tu.GDP complex and induces the exchange of GDP to GTP. It remains bound to the aminoacyl-tRNA.EF-Tu.GTP complex up to the GTP hydrolysis stage on the ribosome. This chain is Elongation factor Ts, found in Mesomycoplasma hyopneumoniae (strain 7448) (Mycoplasma hyopneumoniae).